The chain runs to 653 residues: Rab proteins geranylgeranyltransferase component A 1 (653 aa).

Positions 606–653 are disordered; sequence PPPPNPEDIILDGDSLQPEASESSAIPEANSETFKESTNLGNLEESSE. The segment covering 623–646 has biased composition (polar residues); that stretch reads PEASESSAIPEANSETFKESTNLG.

This sequence belongs to the Rab GDI family. In terms of assembly, monomer. Heterotrimer composed of RABGGTA, RABGGTB and CHM; within this trimer, RABGGTA and RABGGTB form the catalytic component B, while CHM (component A) mediates Rab protein binding. Can associate with the Rab GGTase dimer (RGGT or component B) prior to Rab protein binding; the association is stabilized by geranylgeranyl pyrophosphate (GGpp). The CHM:RGGT:Rab complex is destabilized by GGpp. Interacts with RAB1A, RAB1B, RAB5A, RAB7A and RAB27A and mediates their prenylation. Interacts with the non-phosphorylated forms of RAB3A, RAB3B, RAB3C, RAB3D, RAB5B, RAB5C, RAB8A, RAB8B, RAB10, RAB12, RAB35, and RAB43.

It localises to the cytoplasm. Its subcellular location is the cytosol. Functionally, substrate-binding subunit of the Rab geranylgeranyltransferase (GGTase) complex. Binds unprenylated Rab proteins and presents the substrate peptide to the catalytic component B composed of RABGGTA and RABGGTB, and remains bound to it after the geranylgeranyl transfer reaction. The component A is thought to be regenerated by transferring its prenylated Rab back to the donor membrane. Besides, a pre-formed complex consisting of CHM and the Rab GGTase dimer (RGGT or component B) can bind to and prenylate Rab proteins; this alternative pathway is proposed to be the predominant pathway for Rab protein geranylgeranylation. In Homo sapiens (Human), this protein is Rab proteins geranylgeranyltransferase component A 1 (CHM).